We begin with the raw amino-acid sequence, 270 residues long: Transcription factor PU.1 (270 aa).

The interval 124–162 (LSPAQPSSDEEEGERQSPPLEVSDGEADGLEPGPGLLHG) is disordered. A phosphoserine mark is found at S140 and S146. Positions 153–162 (LEPGPGLLHG) are enriched in low complexity. A DNA-binding region (ETS) is located at residues 170–253 (IRLYQFLLDL…VKKKLTYQFS (84 aa)). Positions 217, 230, 233, and 243 each coordinate DNA.

The protein belongs to the ETS family. As to quaternary structure, binds DNA as a monomer. Can form homomers. Directly interacts with CEBPD/NF-IL6-beta; this interaction does not affect DNA-binding properties of each partner. Interacts with NONO/p54(nrb). Interacts with RUNX1/AML1. Interacts with GFI1; the interaction represses SPI1 transcriptional activity, hence blocks SPI1-induced macrophage differentiation of myeloid progenitor cells. Interacts with CEBPE. Interacts with IRF4/Pip and IRF8. Interacts with JUN. Interacts with RB1. Interacts with TBP.

The protein resides in the nucleus. Transcriptional activity at macrophage-specific genes is inhibited by interaction with GFI1, which results in the inhibition of SPI1-induced macrophage differentiation of myeloid progenitor cells, but not that of the granulocyte lineage. Its function is as follows. Pioneer transcription factor, which controls hematopoietic cell fate by decompacting stem cell heterochromatin and allowing other transcription factors to enter otherwise inaccessible genomic sites. Once in open chromatin, can directly control gene expression by binding genetic regulatory elements and can also more broadly influence transcription by recruiting transcription factors, such as interferon regulatory factors (IRFs), to otherwise inaccessible genomic regions. Transcriptionally activates genes important for myeloid and lymphoid lineages, such as CSF1R. Transcriptional activation from certain promoters, possibly containing low affinity binding sites, is achieved cooperatively with other transcription factors. FCER1A transactivation is achieved in cooperation with GATA1. May be particularly important for the pro- to pre-B cell transition. Binds (via the ETS domain) onto the purine-rich DNA core sequence 5'-GAGGAA-3', also known as the PU-box. In vitro can bind RNA and interfere with pre-mRNA splicing. The sequence is that of Transcription factor PU.1 (SPI1) from Sus scrofa (Pig).